The sequence spans 118 residues: Holo-[acyl-carrier-protein] synthase (118 aa).

Asp8 and Glu58 together coordinate Mg(2+).

Belongs to the P-Pant transferase superfamily. AcpS family. The cofactor is Mg(2+).

Its subcellular location is the cytoplasm. It carries out the reaction apo-[ACP] + CoA = holo-[ACP] + adenosine 3',5'-bisphosphate + H(+). In terms of biological role, transfers the 4'-phosphopantetheine moiety from coenzyme A to a Ser of acyl-carrier-protein. This Streptococcus pyogenes serotype M5 (strain Manfredo) protein is Holo-[acyl-carrier-protein] synthase.